The following is a 263-amino-acid chain: MSSGLYSTEKRDFDTTLDLTQIRPYGDTMNDGKVQMSFTLPVACNEKGIEAALQLARKMGFVNPAVAFSEALDKEFSFYVVYGATSFSVDYTAIKVQALEIDTMDMHECEKYIEENFGREVVMVGASTGTDAHTVGIDAIMNMKGYAGHYGLERYKGVRAYNLGSQVPNEEFIKKAIELKADALLVSQTVTQKDVHIENLTNLVELLEAEGLRDKIILIAGGARITNDLAKELGYDAGFGPGKYADDVATFILKEMVQRGMNK.

Positions 120-259 constitute a B12-binding domain; that stretch reads EVVMVGASTG…TFILKEMVQR (140 aa). Adenosylcob(III)alamin contacts are provided by residues 130 to 136 and histidine 133; that span reads TDAHTVG. N6-(pyridoxal phosphate)lysine is present on lysine 144. Adenosylcob(III)alamin-binding positions include 185–192, 219–223, and 239–244; these read LVSQTVTQ, IAGGA, and FGPGKY.

The protein belongs to the KamE family. In terms of assembly, heterotetramer of 2 alpha and 2 beta subunits. Adenosylcob(III)alamin serves as cofactor. Pyridoxal 5'-phosphate is required as a cofactor.

It carries out the reaction (3S)-3,6-diaminohexanoate = (3S,5S)-3,5-diaminohexanoate. The catalysed reaction is D-lysine = (2R,5S)-2,5-diaminohexanoate. The protein operates within amino-acid degradation; L-lysine degradation via acetate pathway. Its function is as follows. Catalyzes the migration of the L-beta-lysine and D-lysine epsilon amino group to the delta carbon to produce 3,5-diaminohexanoate and 2,5-diaminohexanoate, respectively. This Fusobacterium nucleatum subsp. nucleatum (strain ATCC 25586 / DSM 15643 / BCRC 10681 / CIP 101130 / JCM 8532 / KCTC 2640 / LMG 13131 / VPI 4355) protein is Lysine 5,6-aminomutase beta subunit.